The chain runs to 82 residues: RNA-binding protein Hfq (82 aa).

The Sm domain occupies 11 to 72 (DTFLNAVRKS…ISTIAPSAPV (62 aa)).

Belongs to the Hfq family. In terms of assembly, homohexamer.

RNA chaperone that binds small regulatory RNA (sRNAs) and mRNAs to facilitate mRNA translational regulation in response to envelope stress, environmental stress and changes in metabolite concentrations. Also binds with high specificity to tRNAs. This Hyphomonas neptunium (strain ATCC 15444) protein is RNA-binding protein Hfq.